A 217-amino-acid chain; its full sequence is U exon protein (217 aa).

Disordered regions lie at residues Ser68–Gly110 and Glu170–Arg217. Over residues Gly202–Arg217 the composition is skewed to polar residues.

The protein belongs to the adenoviridae U exon protein family.

It is found in the host nucleus. Its subcellular location is the host nucleoplasm. The protein resides in the host nucleolus. Functionally, might play a role in viral replication since it is associated with viral replication centers. Seems to have an effect on DBP localization. This Homo sapiens (Human) protein is U exon protein.